The primary structure comprises 160 residues: Transcriptional regulator MraZ (160 aa).

2 SpoVT-AbrB domains span residues K5–Y50 and A93–E136.

It belongs to the MraZ family. As to quaternary structure, forms oligomers.

It localises to the cytoplasm. It is found in the nucleoid. The chain is Transcriptional regulator MraZ from Geotalea uraniireducens (strain Rf4) (Geobacter uraniireducens).